Consider the following 329-residue polypeptide: CDP-diacylglycerol--glycerol-3-phosphate 3-phosphatidyltransferase 1, chloroplastic (329 aa).

A chloroplast-targeting transit peptide spans 1-38; the sequence is MAFLKTLNPLLRRSPTPIPNPRSLLSLDAFLAASSPTA. 4 helical membrane passes run 150 to 170, 190 to 210, 217 to 237, and 300 to 320; these read PVIG…TLAL, VFGS…VAIA, LHPG…GGAV, and ITVL…GYGI.

It belongs to the CDP-alcohol phosphatidyltransferase class-I family. Mn(2+) serves as cofactor.

Its subcellular location is the plastid. The protein resides in the chloroplast membrane. It carries out the reaction a CDP-1,2-diacyl-sn-glycerol + sn-glycerol 3-phosphate = a 1,2-diacyl-sn-glycero-3-phospho-(1'-sn-glycero-3'-phosphate) + CMP + H(+). It functions in the pathway phospholipid metabolism; phosphatidylglycerol biosynthesis; phosphatidylglycerol from CDP-diacylglycerol: step 1/2. Its function is as follows. Catalyzes the committed step to the synthesis of the acidic phospholipids. Transfers specifically a phosphatidyl group from CDP-diacylglycerol to glycerol-3-phosphate to form phosphatidylglycerophosphate. This chain is CDP-diacylglycerol--glycerol-3-phosphate 3-phosphatidyltransferase 1, chloroplastic, found in Oryza sativa subsp. japonica (Rice).